We begin with the raw amino-acid sequence, 307 residues long: tRNA(Met) cytidine acetate ligase (307 aa).

ATP-binding positions include 12–25 (VVEY…HIYQ), Gly106, Asn163, and Arg188.

This sequence belongs to the TmcAL family.

The protein resides in the cytoplasm. The catalysed reaction is cytidine(34) in elongator tRNA(Met) + acetate + ATP = N(4)-acetylcytidine(34) in elongator tRNA(Met) + AMP + diphosphate. Its function is as follows. Catalyzes the formation of N(4)-acetylcytidine (ac(4)C) at the wobble position of elongator tRNA(Met), using acetate and ATP as substrates. First activates an acetate ion to form acetyladenylate (Ac-AMP) and then transfers the acetyl group to tRNA to form ac(4)C34. The sequence is that of tRNA(Met) cytidine acetate ligase from Mycoplasmopsis synoviae (strain 53) (Mycoplasma synoviae).